The sequence spans 680 residues: Epithelial splicing regulatory protein 1 (680 aa).

3 RRM domains span residues 224-301, 325-405, and 444-524; these read TVVR…KATG, VIVR…RSTA, and DCIR…QCSA. Serine 542 is modified (phosphoserine). Arginine 581 is modified (omega-N-methylarginine).

The protein belongs to the ESRP family. As to expression, epithelial cell-specific. Epithelial-specific expression in diverse tissues and organs with particularly notable levels of expression in skin and gastrointestinal epithelia.

The protein resides in the nucleus. Functionally, mRNA splicing factor that regulates the formation of epithelial cell-specific isoforms. Specifically regulates the expression of FGFR2-IIIb, an epithelial cell-specific isoform of FGFR2. Also regulates the splicing of CD44, CTNND1, ENAH, 3 transcripts that undergo changes in splicing during the epithelial-to-mesenchymal transition (EMT). Acts by directly binding specific sequences in mRNAs. Binds the GU-rich sequence motifs in the ISE/ISS-3, a cis-element regulatory region present in the mRNA of FGFR2. Regulates splicing and expression of genes involved in inner ear development, auditory hair cell differentiation, and cell fate specification in the cochlear epithelium. The polypeptide is Epithelial splicing regulatory protein 1 (Esrp1) (Mus musculus (Mouse)).